The primary structure comprises 91 residues: Small ribosomal subunit protein uS19c (91 aa).

The protein belongs to the universal ribosomal protein uS19 family.

Its subcellular location is the plastid. It localises to the organellar chromatophore. Protein S19 forms a complex with S13 that binds strongly to the 16S ribosomal RNA. This chain is Small ribosomal subunit protein uS19c, found in Paulinella chromatophora.